The chain runs to 360 residues: POU domain, class 5, transcription factor 1 (360 aa).

Disordered stretches follow at residues 1-48 (MAGH…SGIG) and 86-137 (PPGG…EESQ). The 9aaTAD motif lies at 4–12 (HLASDFAFS). Ser111 is subject to Phosphoserine; by MAPK. Lys123 participates in a covalent cross-link: Glycyl lysine isopeptide (Lys-Gly) (interchain with G-Cter in SUMO). Basic and acidic residues predominate over residues 123–137 (KLDKEKLEPNPEESQ). The region spanning 138-212 (DIKALQKDLE…LLQKWVEEAD (75 aa)) is the POU-specific domain. DNA contacts are provided by Arg157 and Gln164. DNA-binding regions lie at residues 180–186 (SQTTICR) and 193–196 (SFKN). A DNA-binding region (homeobox) is located at residues 230–289 (RKRKRTSIENRVRGNLESMFLQCPKPTLQQISHIAQQLGLEKDVVRVWFCNRRQKGKRSS). Thr235 carries the post-translational modification Phosphothreonine. 4 positions are modified to phosphoserine: Ser236, Ser289, Ser290, and Ser355. Residues 287 to 322 (RSSSDYSQREDFEAAGSPFTGGPVSSPLAPGPHFGT) are disordered.

It belongs to the POU transcription factor family. Class-5 subfamily. As to quaternary structure, interacts with PKM. Interacts with WWP2. Interacts with UBE2I and ZSCAN10. Interacts with PCGF1. Interacts with ESRRB; recruits ESRRB near the POU5F1-SOX2 element in the NANOG proximal promoter; the interaction is DNA independent. Interacts with MAPK8 and MAPK9; the interaction allows MAPK8 and MAPK9 to phosphorylate POU5F1 on Ser-355. Interacts (when phosphorylated on Ser-355) with FBXW8. Interacts with FBXW4. Interacts with SOX2 and SOX15; binds synergistically with either SOX2 or SOX15 to DNA. Interacts with DDX56. Sumoylation enhances the protein stability, DNA binding and transactivation activity. Sumoylation is required for enhanced YES1 expression. In terms of processing, ubiquitinated; undergoes 'Lys-63'-linked polyubiquitination by WWP2 leading to proteasomal degradation. Post-translationally, ERK1/2-mediated phosphorylation at Ser-111 promotes nuclear exclusion and proteasomal degradation. Phosphorylation at Thr-235 and Ser-236 decrease DNA-binding and alters ability to activate transcription. Expressed in immature oocytes.

Its subcellular location is the cytoplasm. It localises to the nucleus. Its function is as follows. Transcription factor that binds to the octamer motif (5'-ATTTGCAT-3'). Forms a trimeric complex with SOX2 or SOX15 on DNA and controls the expression of a number of genes involved in embryonic development such as YES1, FGF4, UTF1 and ZFP206. Critical for early embryogenesis and for embryonic stem cell pluripotency. The sequence is that of POU domain, class 5, transcription factor 1 (POU5F1) from Bos taurus (Bovine).